A 236-amino-acid chain; its full sequence is Factor V activator RVV-V alpha (236 aa).

The Peptidase S1 domain maps to 1-227 (VVGGDECNIN…YNNWIQNIIA (227 aa)). 6 disulfide bridges follow: C7/C141, C28/C44, C76/C234, C120/C188, C152/C167, and C178/C203. Active-site charge relay system residues include H43 and D88. S182 acts as the Charge relay system in catalysis. N-linked (GlcNAc...) asparagine glycosylation occurs at N229.

It belongs to the peptidase S1 family. Snake venom subfamily. In terms of assembly, monomer. Expressed by the venom gland.

It localises to the secreted. It catalyses the reaction Fully activates human clotting factor V by a single cleavage at the 1545-Trp-Tyr-Leu-Arg-|-Ser-Asn-Asn-Gly-1552 bond. Cattle, but not rabbit, factor V is cleaved, and no other proteins of the clotting system are attacked. Esterase activity is observed on Bz-Arg-OEt and Tos-Arg-OMe, and amidase activity on Phe-pipecolyl-Arg-NHPhNO2.. With respect to regulation, inhibited by D-Phe-Pro-Arg-chloromethyl ketone (FPRCK) (97%), PMSF (76%), and benzamidine (50%). Is not inhibited by BPTI, antithrombin and EDTA. Venom serine protease that activates factor V (F5) in a calcium-independent manner. It cleaves the Arg(1545)-Ser(1546) linkage in the human factor V molecule. Induces the coagulation of mammalian plasma. The polypeptide is Factor V activator RVV-V alpha (Daboia siamensis (Eastern Russel's viper)).